Here is a 283-residue protein sequence, read N- to C-terminus: Cyclin-C (283 aa).

Residues 46–144 (NVIQALGEHL…ILECEFYLLE (99 aa)) form the Cyclin N-terminal domain. The tract at residues 252–283 (TILNKMPKPKPPPNSEGEQGTNGSQSSGYSQS) is disordered. Over residues 267–283 (EGEQGTNGSQSSGYSQS) the composition is skewed to polar residues.

Belongs to the cyclin family. Cyclin C subfamily. As to quaternary structure, component of the Mediator complex. The cylin/CDK pair formed by ccnc/cdk8 also associates with the large subunit of RNA polymerase II.

Its subcellular location is the nucleus. In terms of biological role, component of the Mediator complex, a coactivator involved in regulated gene transcription of nearly all RNA polymerase II-dependent genes. Mediator functions as a bridge to convey information from gene-specific regulatory proteins to the basal RNA polymerase II transcription machinery. Mediator is recruited to promoters by direct interactions with regulatory proteins and serves as a scaffold for the assembly of a functional preinitiation complex with RNA polymerase II and the general transcription factors. Binds to and activates cyclin-dependent kinase cdk8 that phosphorylates the CTD (C-terminal domain) of the large subunit of RNA polymerase II (RNAp II), which may inhibit the formation of a transcription initiation complex. This is Cyclin-C (ccnc) from Xenopus tropicalis (Western clawed frog).